Consider the following 582-residue polypeptide: Aspartate--tRNA ligase (582 aa).

Glu174 lines the L-aspartate pocket. The segment at 198-201 (QITK) is aspartate. Arg220 serves as a coordination point for L-aspartate. ATP is bound by residues 220–222 (RDE) and Gln229. His443 serves as a coordination point for L-aspartate. ATP is bound at residue Glu477. Position 484 (Arg484) interacts with L-aspartate. 529–532 (GLDR) provides a ligand contact to ATP.

This sequence belongs to the class-II aminoacyl-tRNA synthetase family. Type 1 subfamily. As to quaternary structure, homodimer.

The protein resides in the cytoplasm. The catalysed reaction is tRNA(Asp) + L-aspartate + ATP = L-aspartyl-tRNA(Asp) + AMP + diphosphate. Its function is as follows. Catalyzes the attachment of L-aspartate to tRNA(Asp) in a two-step reaction: L-aspartate is first activated by ATP to form Asp-AMP and then transferred to the acceptor end of tRNA(Asp). This Streptococcus equi subsp. zooepidemicus (strain MGCS10565) protein is Aspartate--tRNA ligase.